A 158-amino-acid chain; its full sequence is 2-C-methyl-D-erythritol 2,4-cyclodiphosphate synthase (158 aa).

A divalent metal cation contacts are provided by D9 and H11. 4-CDP-2-C-methyl-D-erythritol 2-phosphate is bound by residues 9–11 and 35–36; these read DVH and HS. Residue H43 participates in a divalent metal cation binding. 4-CDP-2-C-methyl-D-erythritol 2-phosphate-binding positions include 57–59, 62–66, 133–136, F140, and R143; these read DIG, FPDTD, and TTTE.

This sequence belongs to the IspF family. As to quaternary structure, homotrimer. It depends on a divalent metal cation as a cofactor.

The catalysed reaction is 4-CDP-2-C-methyl-D-erythritol 2-phosphate = 2-C-methyl-D-erythritol 2,4-cyclic diphosphate + CMP. It functions in the pathway isoprenoid biosynthesis; isopentenyl diphosphate biosynthesis via DXP pathway; isopentenyl diphosphate from 1-deoxy-D-xylulose 5-phosphate: step 4/6. In terms of biological role, involved in the biosynthesis of isopentenyl diphosphate (IPP) and dimethylallyl diphosphate (DMAPP), two major building blocks of isoprenoid compounds. Catalyzes the conversion of 4-diphosphocytidyl-2-C-methyl-D-erythritol 2-phosphate (CDP-ME2P) to 2-C-methyl-D-erythritol 2,4-cyclodiphosphate (ME-CPP) with a corresponding release of cytidine 5-monophosphate (CMP). In Haemophilus influenzae (strain PittGG), this protein is 2-C-methyl-D-erythritol 2,4-cyclodiphosphate synthase.